The sequence spans 208 residues: Small ribosomal subunit protein eS8 (208 aa).

Positions 1–23 are disordered; it reads MGISRDSAHKRRATGGKRKSLRK. The segment covering 8–23 has biased composition (basic residues); that stretch reads AHKRRATGGKRKSLRK.

Belongs to the eukaryotic ribosomal protein eS8 family. In terms of assembly, component of the small ribosomal subunit. Identified in a IGF2BP1-dependent mRNP granule complex containing untranslated mRNAs. Part of the small subunit (SSU) processome, composed of more than 70 proteins and the RNA chaperone small nucleolar RNA (snoRNA) U3.

Its subcellular location is the cytoplasm. It localises to the membrane. The protein resides in the nucleus. The protein localises to the nucleolus. Component of the small ribosomal subunit. The ribosome is a large ribonucleoprotein complex responsible for the synthesis of proteins in the cell. Part of the small subunit (SSU) processome, first precursor of the small eukaryotic ribosomal subunit. During the assembly of the SSU processome in the nucleolus, many ribosome biogenesis factors, an RNA chaperone and ribosomal proteins associate with the nascent pre-rRNA and work in concert to generate RNA folding, modifications, rearrangements and cleavage as well as targeted degradation of pre-ribosomal RNA by the RNA exosome. The sequence is that of Small ribosomal subunit protein eS8 (RpS8) from Drosophila melanogaster (Fruit fly).